The following is a 550-amino-acid chain: Urocanate hydratase (550 aa).

NAD(+) is bound by residues 48–49, glutamine 126, 172–174, glutamate 192, arginine 197, 238–239, 259–263, 268–269, and tyrosine 317; these read GG, GMG, NA, QTSAH, and YL. Residue cysteine 405 is part of the active site. Glycine 487 is an NAD(+) binding site.

This sequence belongs to the urocanase family. Requires NAD(+) as cofactor.

The protein resides in the cytoplasm. It catalyses the reaction 4-imidazolone-5-propanoate = trans-urocanate + H2O. The protein operates within amino-acid degradation; L-histidine degradation into L-glutamate; N-formimidoyl-L-glutamate from L-histidine: step 2/3. Its function is as follows. Catalyzes the conversion of urocanate to 4-imidazolone-5-propionate. This Saccharopolyspora erythraea (strain ATCC 11635 / DSM 40517 / JCM 4748 / NBRC 13426 / NCIMB 8594 / NRRL 2338) protein is Urocanate hydratase.